We begin with the raw amino-acid sequence, 301 residues long: 4-hydroxy-tetrahydrodipicolinate synthase (301 aa).

T53 is a pyruvate binding site. Y142 (proton donor/acceptor) is an active-site residue. Residue K170 is the Schiff-base intermediate with substrate of the active site. V212 provides a ligand contact to pyruvate.

It belongs to the DapA family. Homotetramer; dimer of dimers.

It localises to the cytoplasm. The catalysed reaction is L-aspartate 4-semialdehyde + pyruvate = (2S,4S)-4-hydroxy-2,3,4,5-tetrahydrodipicolinate + H2O + H(+). It participates in amino-acid biosynthesis; L-lysine biosynthesis via DAP pathway; (S)-tetrahydrodipicolinate from L-aspartate: step 3/4. Catalyzes the condensation of (S)-aspartate-beta-semialdehyde [(S)-ASA] and pyruvate to 4-hydroxy-tetrahydrodipicolinate (HTPA). The chain is 4-hydroxy-tetrahydrodipicolinate synthase from Synechocystis sp. (strain ATCC 27184 / PCC 6803 / Kazusa).